The primary structure comprises 224 residues: A-type ATP synthase subunit D (224 aa).

Residues 200–209 (KKVKDKKEAQ) are compositionally biased toward basic and acidic residues. The disordered stretch occupies residues 200 to 224 (KKVKDKKEAQEEAADEAAAAESTGA). Over residues 215–224 (EAAAAESTGA) the composition is skewed to low complexity.

The protein belongs to the V-ATPase D subunit family. As to quaternary structure, has multiple subunits with at least A(3), B(3), C, D, E, F, H, I and proteolipid K(x).

Its subcellular location is the cell membrane. Component of the A-type ATP synthase that produces ATP from ADP in the presence of a proton gradient across the membrane. This is A-type ATP synthase subunit D from Halobacterium salinarum (strain ATCC 29341 / DSM 671 / R1).